Here is a 417-residue protein sequence, read N- to C-terminus: Divinyl chlorophyllide a 8-vinyl-reductase, chloroplastic (417 aa).

A chloroplast-targeting transit peptide spans M1–S49.

In terms of tissue distribution, highly expressed in leaves, stems and flower buds. Detected in roots.

It localises to the plastid. Its subcellular location is the chloroplast. The catalysed reaction is protochlorophyllide a + NADP(+) = 3,8-divinyl protochlorophyllide a + NADPH + H(+). It functions in the pathway porphyrin-containing compound metabolism; chlorophyll biosynthesis. Its function is as follows. Catalyzes the conversion of divinyl chlorophyllide to monovinyl chlorophyllide. Reduces the 8-vinyl group of the tetrapyrrole to an ethyl group using NADPH as the reductant. The best substrate is (3,8-divinyl)-chlorophyllide a (DV-Chlidea). Very low activity with (3,8-divinyl)-protochlorophyllide a (DV-Pchlidea) and (3,8-divinyl)-magnesium-protoporphyrin IX monomethyl ester (DV-MPE). No activity with (3,8-divinyl)-chlorophyllide b (DV-Chlideb), (3,8-divinyl)-magnesium-protoporphyrin IX (DV-Mg-Proto) and either (3,8-divinyl)-chlorophyll a (DV-Chla) or b (DV-Chlb). The chain is Divinyl chlorophyllide a 8-vinyl-reductase, chloroplastic (DVR) from Arabidopsis thaliana (Mouse-ear cress).